A 249-amino-acid polypeptide reads, in one-letter code: DNA repair protein RecO (249 aa).

This sequence belongs to the RecO family.

Involved in DNA repair and RecF pathway recombination. This Lawsonia intracellularis (strain PHE/MN1-00) protein is DNA repair protein RecO.